The sequence spans 229 residues: Uracil-DNA glycosylase (229 aa).

Aspartate 70 (proton acceptor) is an active-site residue.

This sequence belongs to the uracil-DNA glycosylase (UDG) superfamily. UNG family.

Its subcellular location is the cytoplasm. The catalysed reaction is Hydrolyzes single-stranded DNA or mismatched double-stranded DNA and polynucleotides, releasing free uracil.. Functionally, excises uracil residues from the DNA which can arise as a result of misincorporation of dUMP residues by DNA polymerase or due to deamination of cytosine. The chain is Uracil-DNA glycosylase from Chlamydia trachomatis serovar L2b (strain UCH-1/proctitis).